The following is a 275-amino-acid chain: Sulfur carrier protein FdhD (275 aa).

Cys-121 serves as the catalytic Cysteine persulfide intermediate. 258-263 (FSKPGR) contacts Mo-bis(molybdopterin guanine dinucleotide).

This sequence belongs to the FdhD family.

It is found in the cytoplasm. Its function is as follows. Required for formate dehydrogenase (FDH) activity. Acts as a sulfur carrier protein that transfers sulfur from IscS to the molybdenum cofactor prior to its insertion into FDH. The polypeptide is Sulfur carrier protein FdhD (Yersinia enterocolitica serotype O:8 / biotype 1B (strain NCTC 13174 / 8081)).